The primary structure comprises 473 residues: RuvB-like helicase 2 (473 aa).

Residue 76 to 83 coordinates ATP; that stretch reads GPPSTGKT.

It belongs to the RuvB family. May form heterododecamers with RVB1. Component of the SWR1 chromatin remodeling complex, the INO80 chromatin remodeling complex, and of the R2TP complex.

It localises to the nucleus. The catalysed reaction is ATP + H2O = ADP + phosphate + H(+). In terms of biological role, DNA helicase which participates in several chromatin remodeling complexes, including the SWR1 and the INO80 complexes. The SWR1 complex mediates the ATP-dependent exchange of histone H2A for the H2A variant HZT1 leading to transcriptional regulation of selected genes by chromatin remodeling. The INO80 complex remodels chromatin by shifting nucleosomes and is involved in DNA repair. Also involved in pre-rRNA processing. This Gibberella zeae (strain ATCC MYA-4620 / CBS 123657 / FGSC 9075 / NRRL 31084 / PH-1) (Wheat head blight fungus) protein is RuvB-like helicase 2 (RVB2).